A 366-amino-acid polypeptide reads, in one-letter code: Isocitrate dehydrogenase [NAD] subunit alpha, mitochondrial (366 aa).

The N-terminal 27 residues, 1–27 (MAGSAWVSKVSRLLGAFHNTKQVTRGF), are a transit peptide targeting the mitochondrion. N6-succinyllysine is present on lysine 77. Threonine 101 carries the post-translational modification Phosphothreonine. Residues arginine 115, arginine 125, and arginine 146 each coordinate substrate. An N6-acetyllysine modification is found at lysine 223. Mg(2+)-binding residues include aspartate 233, aspartate 257, and aspartate 261. Residue lysine 343 is modified to N6-acetyllysine; alternate. Lysine 343 bears the N6-succinyllysine; alternate mark. An N6-succinyllysine modification is found at lysine 350.

This sequence belongs to the isocitrate and isopropylmalate dehydrogenases family. In terms of assembly, heterooligomer of subunits alpha (IDH3A), beta (IDH3B), and gamma (IDH3G) in the apparent ratio of 2:1:1. The heterodimer containing one IDH3A and one IDH3B subunit and the heterodimer containing one IDH3A and one IDH3G subunit assemble into a heterotetramer (which contains two subunits of IDH3A, one of IDH3B and one of IDH3G) and further into the heterooctamer. The cofactor is Mg(2+). It depends on Mn(2+) as a cofactor. Expressed in brown adipose tissue (BAT).

Its subcellular location is the mitochondrion. The enzyme catalyses D-threo-isocitrate + NAD(+) = 2-oxoglutarate + CO2 + NADH. With respect to regulation, the heterotetramer and the heterodimer composed of IDH3A and IDH3G subunits can be allosterically activated by citrate (CIT) or/and ADP, and the two activators can act independently or synergistically. The heterodimer composed of IDH3A and IDH3B subunits cannot be allosterically regulated and the allosteric regulation of the heterotetramer is through the IDH3G subunit and not the IDH3B subunit. The IDH3G subunit contains the allosteric site which consists of a CIT-binding site and an ADP-binding site, and the binding of CIT and ADP causes conformational changes at the allosteric site which are transmitted to the active site in the catalytic subunit (IDH3A) through a cascade of conformational changes at the heterodimer interface, leading to stabilization of the isocitrate-binding at the active site and thus activation of the enzyme. ATP can activate the heterotetramer and the heterodimer composed of IDH3A and IDH3G subunits at low concentrations but inhibits their activities at high concentrations, whereas ATP exhibits only inhibitory effect on the heterodimer composed of IDH3A and IDH3B subunits. In terms of biological role, catalytic subunit of the enzyme which catalyzes the decarboxylation of isocitrate (ICT) into alpha-ketoglutarate. The heterodimer composed of the alpha (IDH3A) and beta (IDH3B) subunits and the heterodimer composed of the alpha (IDH3A) and gamma (IDH3G) subunits, have considerable basal activity but the full activity of the heterotetramer (containing two subunits of IDH3A, one of IDH3B and one of IDH3G) requires the assembly and cooperative function of both heterodimers. The chain is Isocitrate dehydrogenase [NAD] subunit alpha, mitochondrial from Rattus norvegicus (Rat).